Here is a 67-residue protein sequence, read N- to C-terminus: Large ribosomal subunit protein bL31 (67 aa).

Belongs to the bacterial ribosomal protein bL31 family. Type A subfamily. In terms of assembly, part of the 50S ribosomal subunit.

Its function is as follows. Binds the 23S rRNA. In Finegoldia magna (strain ATCC 29328 / DSM 20472 / WAL 2508) (Peptostreptococcus magnus), this protein is Large ribosomal subunit protein bL31.